Consider the following 345-residue polypeptide: Protein lifeguard 1 (345 aa).

The disordered stretch occupies residues 1–115 (MSHEKSFLVS…GNYQEEGPPS (115 aa)). Pro residues-rich tracts occupy residues 24-46 (APMP…PFQP) and 79-98 (GPYP…PPFQ). Helical transmembrane passes span 139–159 (VFLV…IFTF), 171–191 (VWTY…LSCC), 202–222 (LVAL…IASF), 227–247 (AVIM…IFSM), 257–277 (MGVL…CIFI), 281–301 (ILEI…LAVD), and 320–340 (FAAL…LTII).

It belongs to the BI1 family. LFG subfamily.

The protein localises to the membrane. In terms of biological role, potential apoptotic regulator. The polypeptide is Protein lifeguard 1 (Grina) (Mus musculus (Mouse)).